The primary structure comprises 1563 residues: Galactose-specific cell agglutination protein gsf2 (1563 aa).

The signal sequence occupies residues 1 to 27 (MSVRRFLSTSARALLFTAALLPSLTSG). Repeat copies occupy residues 203 to 280 (TTTT…PTTV), 281 to 358 (TTTT…PTTV), 359 to 436 (TTTT…PTTV), 437 to 514 (TTTT…PTTV), 515 to 592 (TTTT…PTTV), 593 to 670 (TTTT…PTTV), 671 to 750 (TTTT…VSAT), 751 to 825 (TTTT…GTTT), 826 to 869 (VVIQ…GTTT), 870 to 913 (VVIQ…GTTT), 914 to 957 (VVIQ…GTTT), 958 to 1001 (VVIQ…GTTT), 1002 to 1045 (VVIQ…GTTT), 1046 to 1089 (VVIQ…GTTT), 1090 to 1133 (VVIQ…GTTT), 1134 to 1140 (VVINTPT), 1141 to 1162 (TTGS…ETQL), 1163 to 1184 (TTAT…ETQV), 1185 to 1200 (TTGT…ETQA), 1201 to 1221 (TTAT…TETQ), 1223 to 1244 (TTAT…ETQV), 1245 to 1266 (TTAT…ETQV), 1267 to 1282 (TTGT…ETQA), 1283 to 1304 (TTAT…ETQA), 1305 to 1326 (TTAT…ETQV), 1327 to 1348 (TTAT…ETQV), 1349 to 1364 (TTGT…ETQA), 1365 to 1386 (TTAT…ETQV), and 1387 to 1397 (TTATEVQPTTA). Positions 203-825 (TTTTTVGYPG…IPTGTTGTTT (623 aa)) are 8 X 78 AA approximate tandem repeats. N-linked (GlcNAc...) asparagine glycans are attached at residues Asn-224, Asn-263, Asn-302, Asn-341, Asn-380, Asn-419, Asn-458, Asn-497, Asn-536, Asn-575, Asn-614, and Asn-653. A glycan (N-linked (GlcNAc...) asparagine) is linked at Asn-784. The segment at 826–1140 (VVIQTPTTVT…TTTVVINTPT (315 aa)) is 8 X 44 AA approximate tandem repeats. Residues 1135 to 1393 (VINTPTTTGS…TQVTTATEVQ (259 aa)) are disordered. The tract at residues 1141–1397 (TTGSEVLPTT…TATEVQPTTA (257 aa)) is 13 X 22 AA approximate tandem repeats. 4 N-linked (GlcNAc...) asparagine glycosylation sites follow: Asn-1510, Asn-1516, Asn-1529, and Asn-1532. Ser-1539 carries GPI-anchor amidated serine lipidation. Positions 1540 to 1563 (SAGANKPIAYLTFVSLFVYIVTLI) are cleaved as a propeptide — removed in mature form.

The protein belongs to the mam3/map4 family.

It localises to the cell membrane. Galactose-specific adhesion protein essential for non-sexual flocculation and filamentous growth. Required for adhesion and filamentous growth through recognition of galactose residues on cell surface glycoconjugates. Induces flocculation when overexpressed. In Schizosaccharomyces pombe (strain 972 / ATCC 24843) (Fission yeast), this protein is Galactose-specific cell agglutination protein gsf2.